The sequence spans 448 residues: uncharacterized protein (448 aa).

The Extracellular portion of the chain corresponds to M1–K50. The chain crosses the membrane as a helical span at residues I51–W71. The Cytoplasmic portion of the chain corresponds to Y72–G93. The helical transmembrane segment at L94–I114 threads the bilayer. The Extracellular portion of the chain corresponds to S115–A146. Residues I147–V167 form a helical membrane-spanning segment. Topologically, residues D168–K184 are cytoplasmic. Residues L185–S205 traverse the membrane as a helical segment. Residues D206 to K260 lie on the Extracellular side of the membrane. Residues L261–V281 traverse the membrane as a helical segment. Over Y282–Q287 the chain is Cytoplasmic. A helical membrane pass occupies residues F288–S308. Over S309–S333 the chain is Extracellular. A helical membrane pass occupies residues G334–L354. Topologically, residues N355–G386 are cytoplasmic. Position 386–393 (G386–T393) interacts with ATP. The chain crosses the membrane as a helical span at residues V387 to A407. Over N408–Y416 the chain is Extracellular. A helical transmembrane segment spans residues I417–V437. Residues D438–H448 lie on the Cytoplasmic side of the membrane.

The protein resides in the membrane. This is an uncharacterized protein from Saccharomyces cerevisiae (strain ATCC 204508 / S288c) (Baker's yeast).